We begin with the raw amino-acid sequence, 189 residues long: Molybdopterin synthase catalytic subunit (189 aa).

Ser-20 is modified (phosphoserine). Substrate contacts are provided by residues 143–144 (HR), Lys-159, and 166–168 (KKE).

Belongs to the MoaE family. MOCS2B subfamily. In terms of assembly, heterotetramer; composed of 2 small (MOCS2A) and 2 large (MOCS2B) subunits.

The protein resides in the cytoplasm. It is found in the cytosol. The catalysed reaction is 2 [molybdopterin-synthase sulfur-carrier protein]-C-terminal-Gly-aminoethanethioate + cyclic pyranopterin phosphate + H2O = molybdopterin + 2 [molybdopterin-synthase sulfur-carrier protein]-C-terminal Gly-Gly + 2 H(+). The protein operates within cofactor biosynthesis; molybdopterin biosynthesis. In terms of biological role, catalytic subunit of the molybdopterin synthase complex, a complex that catalyzes the conversion of precursor Z into molybdopterin. Acts by mediating the incorporation of 2 sulfur atoms from thiocarboxylated MOCS2A into precursor Z to generate a dithiolene group. The chain is Molybdopterin synthase catalytic subunit from Bos taurus (Bovine).